A 250-amino-acid polypeptide reads, in one-letter code: 5-oxoprolinase subunit A (250 aa).

Belongs to the LamB/PxpA family. As to quaternary structure, forms a complex composed of PxpA, PxpB and PxpC.

It catalyses the reaction 5-oxo-L-proline + ATP + 2 H2O = L-glutamate + ADP + phosphate + H(+). Functionally, catalyzes the cleavage of 5-oxoproline to form L-glutamate coupled to the hydrolysis of ATP to ADP and inorganic phosphate. This chain is 5-oxoprolinase subunit A, found in Paraburkholderia phymatum (strain DSM 17167 / CIP 108236 / LMG 21445 / STM815) (Burkholderia phymatum).